We begin with the raw amino-acid sequence, 157 residues long: D-aminoacyl-tRNA deacylase (157 aa).

The short motif at Gly137–Pro138 is the Gly-cisPro motif, important for rejection of L-amino acids element.

This sequence belongs to the DTD family. As to quaternary structure, homodimer.

The protein resides in the cytoplasm. It carries out the reaction glycyl-tRNA(Ala) + H2O = tRNA(Ala) + glycine + H(+). The enzyme catalyses a D-aminoacyl-tRNA + H2O = a tRNA + a D-alpha-amino acid + H(+). Functionally, an aminoacyl-tRNA editing enzyme that deacylates mischarged D-aminoacyl-tRNAs. Also deacylates mischarged glycyl-tRNA(Ala), protecting cells against glycine mischarging by AlaRS. Acts via tRNA-based rather than protein-based catalysis; rejects L-amino acids rather than detecting D-amino acids in the active site. By recycling D-aminoacyl-tRNA to D-amino acids and free tRNA molecules, this enzyme counteracts the toxicity associated with the formation of D-aminoacyl-tRNA entities in vivo and helps enforce protein L-homochirality. The protein is D-aminoacyl-tRNA deacylase of Roseiflexus castenholzii (strain DSM 13941 / HLO8).